The primary structure comprises 283 residues: Pantothenate synthetase (283 aa).

30-37 (MGNLHLGH) is a binding site for ATP. Catalysis depends on H37, which acts as the Proton donor. Q61 provides a ligand contact to (R)-pantoate. Beta-alanine is bound at residue Q61. 149–152 (GQKD) contacts ATP. Residue Q155 participates in (R)-pantoate binding. Residues I178 and 186 to 189 (MSSR) each bind ATP.

Belongs to the pantothenate synthetase family. As to quaternary structure, homodimer.

Its subcellular location is the cytoplasm. The catalysed reaction is (R)-pantoate + beta-alanine + ATP = (R)-pantothenate + AMP + diphosphate + H(+). It functions in the pathway cofactor biosynthesis; (R)-pantothenate biosynthesis; (R)-pantothenate from (R)-pantoate and beta-alanine: step 1/1. Catalyzes the condensation of pantoate with beta-alanine in an ATP-dependent reaction via a pantoyl-adenylate intermediate. The sequence is that of Pantothenate synthetase from Shewanella halifaxensis (strain HAW-EB4).